The sequence spans 490 residues: Alginate production protein AlgE (490 aa).

The first 32 residues, 1-32 (MNSSRSVNPRPSFAPRALSLAIALLLGAPAFA), serve as a signal peptide directing secretion. Composition is skewed to polar residues over residues 102–115 (DTLQSDTDDGNNSR) and 343–355 (QFQQTGLESNRSN). Disordered regions lie at residues 102–121 (DTLQSDTDDGNNSRNDGREP) and 331–355 (ARGSGGGKDGEEQFQQTGLESNRSN).

Belongs to the AlgE family.

It is found in the cell outer membrane. It functions in the pathway glycan biosynthesis; alginate biosynthesis. In terms of biological role, has non-porin-like, channel-forming properties and probably functions as an alginate permeability pore. This is Alginate production protein AlgE (algE) from Pseudomonas aeruginosa (strain ATCC 15692 / DSM 22644 / CIP 104116 / JCM 14847 / LMG 12228 / 1C / PRS 101 / PAO1).